The primary structure comprises 492 residues: NADH-quinone oxidoreductase subunit N (492 aa).

14 helical membrane passes run 13 to 33, 43 to 63, 82 to 102, 110 to 132, 136 to 155, 169 to 189, 210 to 230, 245 to 265, 272 to 292, 306 to 326, 331 to 351, 377 to 397, 410 to 430, and 457 to 477; these read MLPV…GFWL, ILFV…APWA, AALL…LVSL, VSFA…IAFS, IVML…LATL, FLLG…LYGA, IGIL…KIAL, PTLV…AGML, LAAG…TLVI, LLAY…LGDT, AALG…LAVV, AVAL…AGFF, GYLL…VYYL, and VAVA…NLWY.

It belongs to the complex I subunit 2 family. NDH-1 is composed of 15 different subunits. Subunits NuoA, H, J, K, L, M, N constitute the membrane sector of the complex.

It localises to the cell membrane. It carries out the reaction a quinone + NADH + 5 H(+)(in) = a quinol + NAD(+) + 4 H(+)(out). NDH-1 shuttles electrons from NADH, via FMN and iron-sulfur (Fe-S) centers, to quinones in the respiratory chain. The immediate electron acceptor for the enzyme in this species is believed to be a menaquinone. Couples the redox reaction to proton translocation (for every two electrons transferred, four hydrogen ions are translocated across the cytoplasmic membrane), and thus conserves the redox energy in a proton gradient. This is NADH-quinone oxidoreductase subunit N from Deinococcus radiodurans (strain ATCC 13939 / DSM 20539 / JCM 16871 / CCUG 27074 / LMG 4051 / NBRC 15346 / NCIMB 9279 / VKM B-1422 / R1).